Here is an 814-residue protein sequence, read N- to C-terminus: Valine--tRNA ligase (814 aa).

Residues 46–56 (PTVSGQLHIGH) carry the 'HIGH' region motif. Positions 536-540 (KMSKS) match the 'KMSKS' region motif. Lysine 539 provides a ligand contact to ATP.

Belongs to the class-I aminoacyl-tRNA synthetase family. ValS type 2 subfamily. Monomer.

It is found in the cytoplasm. The enzyme catalyses tRNA(Val) + L-valine + ATP = L-valyl-tRNA(Val) + AMP + diphosphate. Catalyzes the attachment of valine to tRNA(Val). As ValRS can inadvertently accommodate and process structurally similar amino acids such as threonine, to avoid such errors, it has a 'posttransfer' editing activity that hydrolyzes mischarged Thr-tRNA(Val) in a tRNA-dependent manner. The protein is Valine--tRNA ligase of Rickettsia prowazekii (strain Madrid E).